We begin with the raw amino-acid sequence, 509 residues long: Bifunctional purine biosynthesis protein PurH (509 aa).

An MGS-like domain is found at 1 to 144; that stretch reads MKRALISVSD…KNYAAVTVVV (144 aa).

This sequence belongs to the PurH family.

The enzyme catalyses (6R)-10-formyltetrahydrofolate + 5-amino-1-(5-phospho-beta-D-ribosyl)imidazole-4-carboxamide = 5-formamido-1-(5-phospho-D-ribosyl)imidazole-4-carboxamide + (6S)-5,6,7,8-tetrahydrofolate. It catalyses the reaction IMP + H2O = 5-formamido-1-(5-phospho-D-ribosyl)imidazole-4-carboxamide. It functions in the pathway purine metabolism; IMP biosynthesis via de novo pathway; 5-formamido-1-(5-phospho-D-ribosyl)imidazole-4-carboxamide from 5-amino-1-(5-phospho-D-ribosyl)imidazole-4-carboxamide (10-formyl THF route): step 1/1. The protein operates within purine metabolism; IMP biosynthesis via de novo pathway; IMP from 5-formamido-1-(5-phospho-D-ribosyl)imidazole-4-carboxamide: step 1/1. This Listeria monocytogenes serovar 1/2a (strain ATCC BAA-679 / EGD-e) protein is Bifunctional purine biosynthesis protein PurH.